Consider the following 430-residue polypeptide: GTPase Obg (430 aa).

The 158-residue stretch at Met1–Leu158 folds into the Obg domain. The interval Gly122 to Gly143 is disordered. The region spanning Ala159–Glu334 is the OBG-type G domain. GTP-binding positions include Gly165–Ser172, Phe190–Val194, Asp212–Gly215, Thr282–Asp285, and Ser315–Ile317. Mg(2+) contacts are provided by Ser172 and Thr192. Positions Tyr353–Glu430 constitute an OCT domain.

The protein belongs to the TRAFAC class OBG-HflX-like GTPase superfamily. OBG GTPase family. Monomer. Requires Mg(2+) as cofactor.

It localises to the cytoplasm. Its function is as follows. An essential GTPase which binds GTP, GDP and possibly (p)ppGpp with moderate affinity, with high nucleotide exchange rates and a fairly low GTP hydrolysis rate. Plays a role in control of the cell cycle, stress response, ribosome biogenesis and in those bacteria that undergo differentiation, in morphogenesis control. This Pediococcus pentosaceus (strain ATCC 25745 / CCUG 21536 / LMG 10740 / 183-1w) protein is GTPase Obg.